The following is a 118-amino-acid chain: Protein Rev (118 aa).

A phosphoserine; by host CK2 mark is found at Ser-5 and Ser-8. A homomultimerization region spans residues Leu-18–Asp-28. The tract at residues Tyr-23–Arg-52 is disordered. Positions Thr-36–Arg-52 match the Nuclear localization signal and RNA-binding (RRE) motif. Over residues Gln-38–Glu-49 the composition is skewed to basic residues. A Nuclear export signal and binding to XPO1 motif is present at residues Leu-75–Asp-86. The disordered stretch occupies residues Gly-92–Glu-118. 2 positions are modified to phosphoserine; by host: Ser-94 and Ser-101.

It belongs to the HIV-1 REV protein family. In terms of assembly, homomultimer; when bound to the RRE. Multimeric assembly is essential for activity and may involve XPO1. Binds to human KPNB1, XPO1, TNPO1, RANBP5 and IPO7. Interacts with the viral Integrase. Interacts with human KHDRBS1. Interacts with human NAP1; this interaction decreases Rev multimerization and stimulates its activity. Interacts with human DEAD-box helicases DDX3 and DDX24; these interactions may serve for viral RNA export to the cytoplasm and packaging, respectively. Interacts with human PSIP1; this interaction may inhibit HIV-1 DNA integration by promoting dissociation of the Integrase-LEDGF/p75 complex. Asymmetrically arginine dimethylated at one site by host PRMT6. Methylation impairs the RNA-binding activity and export of viral RNA from the nucleus to the cytoplasm. In terms of processing, phosphorylated by protein kinase CK2. Presence of, and maybe binding to the N-terminus of the regulatory beta subunit of CK2 is necessary for CK2-mediated Rev's phosphorylation.

The protein resides in the host nucleus. Its subcellular location is the host nucleolus. It localises to the host cytoplasm. Its function is as follows. Escorts unspliced or incompletely spliced viral pre-mRNAs (late transcripts) out of the nucleus of infected cells. These pre-mRNAs carry a recognition sequence called Rev responsive element (RRE) located in the env gene, that is not present in fully spliced viral mRNAs (early transcripts). This function is essential since most viral proteins are translated from unspliced or partially spliced pre-mRNAs which cannot exit the nucleus by the pathway used by fully processed cellular mRNAs. Rev itself is translated from a fully spliced mRNA that readily exits the nucleus. Rev's nuclear localization signal (NLS) binds directly to KPNB1/Importin beta-1 without previous binding to KPNA1/Importin alpha-1. KPNB1 binds to the GDP bound form of RAN (Ran-GDP) and targets Rev to the nucleus. In the nucleus, the conversion from Ran-GDP to Ran-GTP dissociates Rev from KPNB1 and allows Rev's binding to the RRE in viral pre-mRNAs. Rev multimerization on the RRE via cooperative assembly exposes its nuclear export signal (NES) to the surface. Rev can then form a complex with XPO1/CRM1 and Ran-GTP, leading to nuclear export of the complex. Conversion from Ran-GTP to Ran-GDP mediates dissociation of the Rev/RRE/XPO1/RAN complex, so that Rev can return to the nucleus for a subsequent round of export. Beside KPNB1, also seems to interact with TNPO1/Transportin-1, RANBP5/IPO5 and IPO7/RANBP7 for nuclear import. The nucleoporin-like HRB/RIP is an essential cofactor that probably indirectly interacts with Rev to release HIV RNAs from the perinuclear region to the cytoplasm. This is Protein Rev from Human immunodeficiency virus type 1 group M subtype B (isolate LW123) (HIV-1).